A 227-amino-acid polypeptide reads, in one-letter code: Gamma-glutamyl-hercynylcysteine sulfoxide hydrolase (227 aa).

Cys-2 serves as the catalytic Nucleophile. In terms of domain architecture, Glutamine amidotransferase type-2 spans 2–227 (CRHVAWLGAP…RDAHVVVTPL (226 aa)).

The catalysed reaction is gamma-L-glutamyl-hercynylcysteine S-oxide + H2O = S-(hercyn-2-yl)-L-cysteine S-oxide + L-glutamate. The protein operates within amino-acid biosynthesis; ergothioneine biosynthesis. In terms of biological role, catalyzes the hydrolysis of the gamma-glutamyl amide bond of hercynyl-gamma-L-glutamyl-L-cysteine sulfoxide to produce hercynylcysteine sulfoxide, a step in the biosynthesis pathway of ergothioneine. The sequence is that of Gamma-glutamyl-hercynylcysteine sulfoxide hydrolase from Mycolicibacterium smegmatis (strain ATCC 700084 / mc(2)155) (Mycobacterium smegmatis).